We begin with the raw amino-acid sequence, 128 residues long: Large ribosomal subunit protein bL17 (128 aa).

This sequence belongs to the bacterial ribosomal protein bL17 family. Part of the 50S ribosomal subunit. Contacts protein L32.

The polypeptide is Large ribosomal subunit protein bL17 (Pseudomonas entomophila (strain L48)).